Here is a 246-residue protein sequence, read N- to C-terminus: Probable transcriptional regulatory protein CLB_3102 (246 aa).

This sequence belongs to the TACO1 family.

It is found in the cytoplasm. The sequence is that of Probable transcriptional regulatory protein CLB_3102 from Clostridium botulinum (strain ATCC 19397 / Type A).